Here is a 75-residue protein sequence, read N- to C-terminus: Small ribosomal subunit protein bS18 (75 aa).

The protein belongs to the bacterial ribosomal protein bS18 family. In terms of assembly, part of the 30S ribosomal subunit. Forms a tight heterodimer with protein bS6.

Functionally, binds as a heterodimer with protein bS6 to the central domain of the 16S rRNA, where it helps stabilize the platform of the 30S subunit. This chain is Small ribosomal subunit protein bS18, found in Desulforudis audaxviator (strain MP104C).